The following is a 361-amino-acid chain: Phosphoserine aminotransferase (361 aa).

Arg42 serves as a coordination point for L-glutamate. Pyridoxal 5'-phosphate contacts are provided by residues Ala76–Thr77, Trp102, Thr152, Asp172, and Gln195. An N6-(pyridoxal phosphate)lysine modification is found at Lys196. Residue Asn237–Thr238 participates in pyridoxal 5'-phosphate binding.

This sequence belongs to the class-V pyridoxal-phosphate-dependent aminotransferase family. SerC subfamily. As to quaternary structure, homodimer. Pyridoxal 5'-phosphate serves as cofactor.

It localises to the cytoplasm. The enzyme catalyses O-phospho-L-serine + 2-oxoglutarate = 3-phosphooxypyruvate + L-glutamate. It carries out the reaction 4-(phosphooxy)-L-threonine + 2-oxoglutarate = (R)-3-hydroxy-2-oxo-4-phosphooxybutanoate + L-glutamate. The protein operates within amino-acid biosynthesis; L-serine biosynthesis; L-serine from 3-phospho-D-glycerate: step 2/3. It participates in cofactor biosynthesis; pyridoxine 5'-phosphate biosynthesis; pyridoxine 5'-phosphate from D-erythrose 4-phosphate: step 3/5. Catalyzes the reversible conversion of 3-phosphohydroxypyruvate to phosphoserine and of 3-hydroxy-2-oxo-4-phosphonooxybutanoate to phosphohydroxythreonine. This is Phosphoserine aminotransferase from Xanthomonas euvesicatoria pv. vesicatoria (strain 85-10) (Xanthomonas campestris pv. vesicatoria).